The chain runs to 322 residues: Large ribosomal subunit protein uL29m (322 aa).

A disordered region spans residues 1-44 (MLNVQRGLHTTVRLSARTKYTKPKPKPQARVIKSEPSQVTHHDN).

It belongs to the universal ribosomal protein uL29 family. Component of the mitochondrial large ribosomal subunit. Mature mitochondrial ribosomes consist of a small (37S) and a large (54S) subunit. The 37S subunit contains at least 33 different proteins and 1 molecule of RNA (15S). The 54S subunit contains at least 45 different proteins and 1 molecule of RNA (21S).

The protein resides in the mitochondrion. This chain is Large ribosomal subunit protein uL29m (MRPL4), found in Vanderwaltozyma polyspora (strain ATCC 22028 / DSM 70294 / BCRC 21397 / CBS 2163 / NBRC 10782 / NRRL Y-8283 / UCD 57-17) (Kluyveromyces polysporus).